The primary structure comprises 283 residues: Elongation factor Ts (283 aa).

The segment at 80-83 is involved in Mg(2+) ion dislocation from EF-Tu; sequence TDFV.

Belongs to the EF-Ts family.

The protein resides in the cytoplasm. Functionally, associates with the EF-Tu.GDP complex and induces the exchange of GDP to GTP. It remains bound to the aminoacyl-tRNA.EF-Tu.GTP complex up to the GTP hydrolysis stage on the ribosome. The sequence is that of Elongation factor Ts from Actinobacillus pleuropneumoniae serotype 3 (strain JL03).